A 191-amino-acid chain; its full sequence is Fe/S biogenesis protein NfuA (191 aa).

[4Fe-4S] cluster is bound by residues cysteine 149 and cysteine 152.

It belongs to the NfuA family. Homodimer. The cofactor is [4Fe-4S] cluster.

Functionally, involved in iron-sulfur cluster biogenesis. Binds a 4Fe-4S cluster, can transfer this cluster to apoproteins, and thereby intervenes in the maturation of Fe/S proteins. Could also act as a scaffold/chaperone for damaged Fe/S proteins. In Cronobacter sakazakii (strain ATCC BAA-894) (Enterobacter sakazakii), this protein is Fe/S biogenesis protein NfuA.